Here is a 542-residue protein sequence, read N- to C-terminus: Putative cysteine ligase BshC (542 aa).

A coiled-coil region spans residues 458–487; sequence VAKNAAILQAQIEFLQHALERALLRKHETE.

It belongs to the BshC family.

Functionally, involved in bacillithiol (BSH) biosynthesis. May catalyze the last step of the pathway, the addition of cysteine to glucosamine malate (GlcN-Mal) to generate BSH. This Geobacillus kaustophilus (strain HTA426) protein is Putative cysteine ligase BshC.